The primary structure comprises 237 residues: Demethylmenaquinone methyltransferase (237 aa).

Residues threonine 58, aspartate 79, and 106–107 (NA) each bind S-adenosyl-L-methionine.

This sequence belongs to the class I-like SAM-binding methyltransferase superfamily. MenG/UbiE family.

It carries out the reaction a 2-demethylmenaquinol + S-adenosyl-L-methionine = a menaquinol + S-adenosyl-L-homocysteine + H(+). It participates in quinol/quinone metabolism; menaquinone biosynthesis; menaquinol from 1,4-dihydroxy-2-naphthoate: step 2/2. Its function is as follows. Methyltransferase required for the conversion of demethylmenaquinol (DMKH2) to menaquinol (MKH2). In Bacillus cytotoxicus (strain DSM 22905 / CIP 110041 / 391-98 / NVH 391-98), this protein is Demethylmenaquinone methyltransferase.